Here is a 1342-residue protein sequence, read N- to C-terminus: DNA-directed RNA polymerase subunit beta (1342 aa).

This sequence belongs to the RNA polymerase beta chain family. The RNAP catalytic core consists of 2 alpha, 1 beta, 1 beta' and 1 omega subunit. When a sigma factor is associated with the core the holoenzyme is formed, which can initiate transcription.

The catalysed reaction is RNA(n) + a ribonucleoside 5'-triphosphate = RNA(n+1) + diphosphate. In terms of biological role, DNA-dependent RNA polymerase catalyzes the transcription of DNA into RNA using the four ribonucleoside triphosphates as substrates. This chain is DNA-directed RNA polymerase subunit beta, found in Buchnera aphidicola subsp. Schizaphis graminum (strain Sg).